The following is a 344-amino-acid chain: NDP-polyphosphate phosphotransferase 2 (344 aa).

The interval 1–60 is disordered; it reads METAKPIAPQKDSKANGVDATDPVVKVASPQDPAGDAKVEDATAPVAEVEPRTPRNRRLP.

Belongs to the polyphosphate kinase 2 (PPK2) family. Class I subfamily. Mg(2+) is required as a cofactor.

The enzyme catalyses [phosphate](n) + ATP = [phosphate](n+1) + ADP. The catalysed reaction is [phosphate](n) + CTP = [phosphate](n+1) + CDP. It carries out the reaction [phosphate](n) + GTP = [phosphate](n+1) + GDP. It catalyses the reaction [phosphate](n) + UTP = [phosphate](n+1) + UDP. Functionally, uses inorganic polyphosphate (polyP) as a donor to convert NDP to NTP. PolyP hydrolysis is slightly faster with ADP, but it can also use GDP, CDP and UDP. In Ruegeria pomeroyi (strain ATCC 700808 / DSM 15171 / DSS-3) (Silicibacter pomeroyi), this protein is NDP-polyphosphate phosphotransferase 2.